A 77-amino-acid polypeptide reads, in one-letter code: SS18-like protein 2 (77 aa).

Residues Tyr-50 to Val-53 carry the SH2-binding motif.

It belongs to the SS18 family.

The sequence is that of SS18-like protein 2 (SS18L2) from Homo sapiens (Human).